The chain runs to 157 residues: MAEVEYRCFVGGLAWATNDESLEQAFSQFGDITDSKIINDRETGRSRGFGFVTFKDEKSMRDAIEGMNGQELDGRNITVNEAQSRGSGGGGGRREGGGGGYGGGGGYGGRREGGGGGGYGGRREGGGGGYGGGGGGYGGRREGGDGGYGGGGGGSRW.

The RRM domain occupies 6–84 (YRCFVGGLAW…RNITVNEAQS (79 aa)). The tract at residues 70-157 (QELDGRNITV…YGGGGGGSRW (88 aa)) is disordered. 2 stretches are compositionally biased toward gly residues: residues 86 to 138 (GSGG…GGYG) and 145 to 157 (DGGY…GSRW).

May play a role in the biosynthesis and processing of heterogeneous nuclear RNA and in the maturation of specific mRNAs in response to wounding. The sequence is that of Glycine-rich RNA-binding protein from Daucus carota (Wild carrot).